A 406-amino-acid chain; its full sequence is GTPase Obg (406 aa).

Residues 1–159 (MKFVDEVSIH…RDLKLELKVL (159 aa)) enclose the Obg domain. Positions 127–148 (NTRFKSSTNRAPRQTTPGKPGE) are disordered. Over residues 129-143 (RFKSSTNRAPRQTTP) the composition is skewed to polar residues. One can recognise an OBG-type G domain in the interval 160–334 (ADVGLLGLPN…LSQDIMRYLD (175 aa)). Residues 166–173 (GLPNAGKS), 191–195 (FTTLV), 213–216 (DIPG), 283–286 (NKMD), and 315–317 (SAL) each bind GTP. Positions 173 and 193 each coordinate Mg(2+). A disordered region spans residues 378–406 (GLKNAGAADDDDFDDEEDDGDGPEIFYVP). Positions 385-399 (ADDDDFDDEEDDGDG) are enriched in acidic residues.

It belongs to the TRAFAC class OBG-HflX-like GTPase superfamily. OBG GTPase family. In terms of assembly, monomer. Requires Mg(2+) as cofactor.

Its subcellular location is the cytoplasm. Functionally, an essential GTPase which binds GTP, GDP and possibly (p)ppGpp with moderate affinity, with high nucleotide exchange rates and a fairly low GTP hydrolysis rate. Plays a role in control of the cell cycle, stress response, ribosome biogenesis and in those bacteria that undergo differentiation, in morphogenesis control. The sequence is that of GTPase Obg from Pseudomonas paraeruginosa (strain DSM 24068 / PA7) (Pseudomonas aeruginosa (strain PA7)).